Reading from the N-terminus, the 249-residue chain is Ubiquinone/menaquinone biosynthesis C-methyltransferase UbiE (249 aa).

Residues Thr-72, Asp-93, and 121–122 contribute to the S-adenosyl-L-methionine site; that span reads DA.

The protein belongs to the class I-like SAM-binding methyltransferase superfamily. MenG/UbiE family.

The enzyme catalyses a 2-demethylmenaquinol + S-adenosyl-L-methionine = a menaquinol + S-adenosyl-L-homocysteine + H(+). It carries out the reaction a 2-methoxy-6-(all-trans-polyprenyl)benzene-1,4-diol + S-adenosyl-L-methionine = a 5-methoxy-2-methyl-3-(all-trans-polyprenyl)benzene-1,4-diol + S-adenosyl-L-homocysteine + H(+). Its pathway is quinol/quinone metabolism; menaquinone biosynthesis; menaquinol from 1,4-dihydroxy-2-naphthoate: step 2/2. It functions in the pathway cofactor biosynthesis; ubiquinone biosynthesis. Methyltransferase required for the conversion of demethylmenaquinol (DMKH2) to menaquinol (MKH2) and the conversion of 2-polyprenyl-6-methoxy-1,4-benzoquinol (DDMQH2) to 2-polyprenyl-3-methyl-6-methoxy-1,4-benzoquinol (DMQH2). The polypeptide is Ubiquinone/menaquinone biosynthesis C-methyltransferase UbiE (Saccharophagus degradans (strain 2-40 / ATCC 43961 / DSM 17024)).